Reading from the N-terminus, the 672-residue chain is Beta-galactosidase bgaB (672 aa).

R109 is a binding site for substrate. C113 contacts Zn(2+). Residue N147 participates in substrate binding. The active-site Proton donor is the E148. Positions 156, 158, and 161 each coordinate Zn(2+). The active-site Nucleophile is E303. Substrate-binding positions include W311 and 351–354; that span reads EKFH.

It belongs to the glycosyl hydrolase 42 family.

The catalysed reaction is Hydrolysis of terminal non-reducing beta-D-galactose residues in beta-D-galactosides.. Its activity is regulated as follows. By divalent metal ions. Fe(2+), Zn(2+), Cu(2+), Pb(2+) and Sn(2+) inhibit 52, 76.6, 85.3, 100 and 100% of the enzyme activity, respectively. Other metal cations and EDTA do not inhibit this enzyme. Thiol reagents 2-mercaptoethanol and dithiothreitol have no effect on the activity. Sulfhydryl group-blocking reagents p-chloromercuribenzoic acid and iodoacetic acid inhibit 86.2 and 74% of the enzyme activity, respectively. In terms of biological role, hydrolyzes 6-bromo-2-naphthyl-beta-D-galactopyranoside and o-nitrophenyl-beta-D-galactopyranoside (ONPG). Possesses a high level of transgalactosylation activity. Hydrolyzes lactose in milk. This chain is Beta-galactosidase bgaB (bgaB), found in Geobacillus kaustophilus.